The primary structure comprises 82 residues: Delta-conotoxin SVIE (82 aa).

Positions 1–22 (MKLTCVMIVAVLFLTTWTFVTA) are cleaved as a signal peptide. Positions 23 to 51 (DDSRYGLKNLFPKARHEMKNPEASKLNKR) are excised as a propeptide. 3 disulfides stabilise this stretch: Cys54-Cys69, Cys61-Cys73, and Cys68-Cys77. The residue at position 65 (Pro65) is a 4-hydroxyproline.

The protein belongs to the conotoxin O1 superfamily. Expressed by the venom duct.

The protein localises to the secreted. Its function is as follows. Delta-conotoxins bind to site 6 of voltage-gated sodium channels (Nav) and inhibit the inactivation process. Impairs rapid channel inactivation of Nav1.4/SCN4A (Kd=500 nM). Interacts with a conserved hydrophobic triad (YFV) in the domain-4 voltage sensor of sodium channels. In vivo, injection of both native or synthetic peptide induces twitching of back limbs, running in circles, and spastic paralysis. This chain is Delta-conotoxin SVIE (SO6), found in Conus striatus (Striated cone).